The chain runs to 239 residues: ATP-dependent dethiobiotin synthetase BioD (239 aa).

15–20 (EIGKTF) serves as a coordination point for ATP. A Mg(2+)-binding site is contributed by T19. K40 is a catalytic residue. Residues D57, 118 to 121 (EGVG), 178 to 179 (NH), and 211 to 213 (AHL) each bind ATP. Mg(2+)-binding residues include D57 and E118.

Belongs to the dethiobiotin synthetase family. As to quaternary structure, homodimer. Requires Mg(2+) as cofactor.

It localises to the cytoplasm. It carries out the reaction (7R,8S)-7,8-diammoniononanoate + CO2 + ATP = (4R,5S)-dethiobiotin + ADP + phosphate + 3 H(+). Its pathway is cofactor biosynthesis; biotin biosynthesis; biotin from 7,8-diaminononanoate: step 1/2. Catalyzes a mechanistically unusual reaction, the ATP-dependent insertion of CO2 between the N7 and N8 nitrogen atoms of 7,8-diaminopelargonic acid (DAPA, also called 7,8-diammoniononanoate) to form a ureido ring. This chain is ATP-dependent dethiobiotin synthetase BioD, found in Burkholderia vietnamiensis (strain G4 / LMG 22486) (Burkholderia cepacia (strain R1808)).